The primary structure comprises 419 residues: Serine hydroxymethyltransferase (419 aa).

(6S)-5,6,7,8-tetrahydrofolate contacts are provided by residues L121 and 125–127 (GHL). An N6-(pyridoxal phosphate)lysine modification is found at K229. Position 354–356 (354–356 (SPF)) interacts with (6S)-5,6,7,8-tetrahydrofolate.

Belongs to the SHMT family. In terms of assembly, homodimer. Pyridoxal 5'-phosphate serves as cofactor.

It is found in the cytoplasm. The catalysed reaction is (6R)-5,10-methylene-5,6,7,8-tetrahydrofolate + glycine + H2O = (6S)-5,6,7,8-tetrahydrofolate + L-serine. Its pathway is one-carbon metabolism; tetrahydrofolate interconversion. It participates in amino-acid biosynthesis; glycine biosynthesis; glycine from L-serine: step 1/1. Functionally, catalyzes the reversible interconversion of serine and glycine with tetrahydrofolate (THF) serving as the one-carbon carrier. This reaction serves as the major source of one-carbon groups required for the biosynthesis of purines, thymidylate, methionine, and other important biomolecules. Also exhibits THF-independent aldolase activity toward beta-hydroxyamino acids, producing glycine and aldehydes, via a retro-aldol mechanism. The chain is Serine hydroxymethyltransferase from Coxiella burnetii (strain CbuG_Q212) (Coxiella burnetii (strain Q212)).